A 729-amino-acid polypeptide reads, in one-letter code: Catalase-peroxidase (729 aa).

A cross-link (tryptophyl-tyrosyl-methioninium (Trp-Tyr) (with M-244)) is located at residues Trp-95–Tyr-218. Catalysis depends on His-96, which acts as the Proton acceptor. A cross-link (tryptophyl-tyrosyl-methioninium (Tyr-Met) (with W-95)) is located at residues Tyr-218–Met-244. His-259 is a heme b binding site.

It belongs to the peroxidase family. Peroxidase/catalase subfamily. As to quaternary structure, homodimer or homotetramer. Requires heme b as cofactor. Post-translationally, formation of the three residue Trp-Tyr-Met cross-link is important for the catalase, but not the peroxidase activity of the enzyme.

It carries out the reaction H2O2 + AH2 = A + 2 H2O. It catalyses the reaction 2 H2O2 = O2 + 2 H2O. Its function is as follows. Bifunctional enzyme with both catalase and broad-spectrum peroxidase activity. This is Catalase-peroxidase from Synechococcus sp. (strain CC9605).